Here is a 475-residue protein sequence, read N- to C-terminus: Subtilisin-like protease PopC (475 aa).

Disordered regions lie at residues 1 to 27 and 57 to 106; these read MKSY…EQGE and TLPG…QTGA. The region spanning 165-475 is the Peptidase S8 domain; that stretch reads NRGMSSLAER…KTGKGLAVFR (311 aa). Residues Asp-201, His-243, and Ser-423 each act as charge relay system in the active site.

The protein belongs to the peptidase S8 family. In terms of assembly, interacts with PopD in non-starving cells.

The protein localises to the cytoplasm. The protein resides in the periplasm. It is found in the secreted. Its activity is regulated as follows. In non-starving cells, secretion and protease activity are inhibited by formation of a cytoplasmic complex with PopD. In response to starvation, PopD is degraded in a RelA- and FtsH(D)-dependent manner, thereby releasing pre-formed PopC for secretion. Secreted and active during starvation, and rapidly degraded upon secretion. Secretion is significantly and reversibly reduced by carbonyl cyanide m-chlorophenyl hydrazine (CCCP), which dissipates or reduces the proton motive force (PMF), and by nigericin, which affects the pH gradient. Functionally, required for fruiting body formation, a multicellular developmental program that is induced in response to starvation. Acts as a subtilisin-like protease that directly cleaves the CsgA precursor protein (p25) on the cell surface to generate the intercellular C-signal protein (p17) in starving cells. Preferentially acts in cis, i.e. PopC secreted by a cell only cleaves p25 on that cell. May also be important for processing of other protein(s) that are important for development. This chain is Subtilisin-like protease PopC, found in Myxococcus xanthus (strain DK1622).